We begin with the raw amino-acid sequence, 325 residues long: tRNA dimethylallyltransferase (325 aa).

12 to 19 (GPTASGKT) provides a ligand contact to ATP. 14 to 19 (TASGKT) lines the substrate pocket. 3 interaction with substrate tRNA regions span residues 37–40 (DSAL), 161–165 (QRIHR), and 244–249 (RCVGYR).

It belongs to the IPP transferase family. As to quaternary structure, monomer. It depends on Mg(2+) as a cofactor.

The catalysed reaction is adenosine(37) in tRNA + dimethylallyl diphosphate = N(6)-dimethylallyladenosine(37) in tRNA + diphosphate. Functionally, catalyzes the transfer of a dimethylallyl group onto the adenine at position 37 in tRNAs that read codons beginning with uridine, leading to the formation of N6-(dimethylallyl)adenosine (i(6)A). This Chromobacterium violaceum (strain ATCC 12472 / DSM 30191 / JCM 1249 / CCUG 213 / NBRC 12614 / NCIMB 9131 / NCTC 9757 / MK) protein is tRNA dimethylallyltransferase.